A 360-amino-acid polypeptide reads, in one-letter code: Protein RecA (360 aa).

77–84 (GPESSGKT) contributes to the ATP binding site.

This sequence belongs to the RecA family.

It is found in the cytoplasm. Functionally, can catalyze the hydrolysis of ATP in the presence of single-stranded DNA, the ATP-dependent uptake of single-stranded DNA by duplex DNA, and the ATP-dependent hybridization of homologous single-stranded DNAs. It interacts with LexA causing its activation and leading to its autocatalytic cleavage. The protein is Protein RecA of Chelativorans sp. (strain BNC1).